The following is a 317-amino-acid chain: MFRKILSVLNPTVFVLSLCFQIILIYTIIRHSPKNLSTLKAILLTNCCFQLLQSSMVFFTQIQLVNHLVPIELWSYGPCRHFEAFMCYSMFHILQTSSLVSGLTVFLTTFMKYQAARHVRPSKKKNCFVILFISSIVLISAGCGILLVIIQALPLEIREKYYRINLELDEYSVIGIVDYSVLPSRVNGIIINGLVVIVPITCLLLRRKILKLLTASSDALYFQNRVFLQGLTLQIFGHTLVYVPIFICSTISLITKTEYTFAQFFIFVLPHLTTVIDPLLTMYFVTPYRKRLMVWLRLKNDKVHSVSPSTFAVSANH.

6 consecutive transmembrane segments (helical) span residues 5-25 (ILSV…IILI), 90-110 (MFHI…LTTF), 130-150 (ILFI…LVII), 185-205 (RVNG…CLLL), 235-255 (IFGH…SLIT), and 264-284 (FFIF…TMYF).

The protein belongs to the nematode receptor-like protein srd family.

Its subcellular location is the membrane. The protein is Serpentine receptor class delta-44 (srd-44) of Caenorhabditis elegans.